A 428-amino-acid polypeptide reads, in one-letter code: Chaperone SurA (428 aa).

Residues 1–13 form the signal peptide; sequence MLGALLLSGAVHA. PpiC domains follow at residues 164–265 and 276–375; these read SEEF…KLLE and RDEV…EVLG. Positions 211-230 are disordered; that stretch reads TSSSSENALEGGDMGWRKAA.

The protein resides in the periplasm. It catalyses the reaction [protein]-peptidylproline (omega=180) = [protein]-peptidylproline (omega=0). Functionally, chaperone involved in the correct folding and assembly of outer membrane proteins. Recognizes specific patterns of aromatic residues and the orientation of their side chains, which are found more frequently in integral outer membrane proteins. May act in both early periplasmic and late outer membrane-associated steps of protein maturation. The chain is Chaperone SurA from Pseudomonas syringae pv. syringae (strain B728a).